We begin with the raw amino-acid sequence, 503 residues long: Probable apyrase 4 (503 aa).

Over residues 1-14 (MQRSNARSRSNINS) the composition is skewed to low complexity. Positions 1 to 39 (MQRSNARSRSNINSDMVDPPEVQTSPGNHRSSPSTAAKP) are disordered. At 1-45 (MQRSNARSRSNINSDMVDPPEVQTSPGNHRSSPSTAAKPKSKRTK) the chain is on the cytoplasmic side. The chain crosses the membrane as a helical; Signal-anchor for type II membrane protein span at residues 46–66 (SIIFVIVACVTIALGLLFIGY). The Extracellular segment spans residues 67-503 (SILRSGRNRR…DLSNVAKYKI (437 aa)). ATP is bound at residue 83-93 (VIIDGGSSGTR). Glu206 functions as the Proton acceptor in the catalytic mechanism. 230-240 (GIVELGGASAQ) provides a ligand contact to ATP. N-linked (GlcNAc...) asparagine glycosylation is found at Asn261, Asn293, and Asn338.

The protein belongs to the GDA1/CD39 NTPase family. The cofactor is Ca(2+). Expressed both in the primary root and lateral root but not in the rosette leaves.

It is found in the membrane. It catalyses the reaction a ribonucleoside 5'-triphosphate + 2 H2O = a ribonucleoside 5'-phosphate + 2 phosphate + 2 H(+). Functionally, catalyzes the hydrolysis of phosphoanhydride bonds of nucleoside tri- and di-phosphates. The chain is Probable apyrase 4 (APY4) from Arabidopsis thaliana (Mouse-ear cress).